The sequence spans 611 residues: UvrABC system protein C (611 aa).

The GIY-YIG domain occupies 19-97; that stretch reads QRPGVYRMVD…IKELRPRYNV (79 aa). A UVR domain is found at 207-242; that stretch reads NQVIEELGARMEAASERLEFEAAAQYRDRIQALQAV.

The protein belongs to the UvrC family. As to quaternary structure, interacts with UvrB in an incision complex.

The protein resides in the cytoplasm. In terms of biological role, the UvrABC repair system catalyzes the recognition and processing of DNA lesions. UvrC both incises the 5' and 3' sides of the lesion. The N-terminal half is responsible for the 3' incision and the C-terminal half is responsible for the 5' incision. In Alkalilimnicola ehrlichii (strain ATCC BAA-1101 / DSM 17681 / MLHE-1), this protein is UvrABC system protein C.